The sequence spans 57 residues: Bowman-Birk type proteinase inhibitor B4 (57 aa).

Disulfide bonds link cysteine 6/cysteine 55, cysteine 12/cysteine 17, cysteine 26/cysteine 33, and cysteine 30/cysteine 47.

It belongs to the Bowman-Birk serine protease inhibitor family. In terms of tissue distribution, expressed in bulb (at protein level).

Its function is as follows. Serine protease inhibitor. Inhibits trypsin (Ki = 110 nM) and very weakly inhibits chymotrypsin (Ki =1200 nM). Does not inhibit bacterial subtilisin. The sequence is that of Bowman-Birk type proteinase inhibitor B4 from Hyacinthus orientalis (Common hyacinth).